A 122-amino-acid chain; its full sequence is MGLFSRRAIGNQYESLAKEYLQRQGLRFIEANFTTKVGEIDLIFKEAQTIVFVEVKYRKNSCYGDAAEMVNPAKANKLIKTAYLWLNKHGYNACNTAMRFDVVAIHSNGHDINWIANAITQG.

This sequence belongs to the UPF0102 family.

In Vibrio vulnificus (strain CMCP6), this protein is UPF0102 protein VV1_0590.